A 154-amino-acid chain; its full sequence is MTQDYKLQVEAIKCGTVIDHIPAQIGFKLLSLFKLTATDQRITIGLNLPSKRSGRKDLIKIENTFLTEQQANQLAMYAPDATVNRIDNYEVVKKLTLSLPERIDAVLTCPNSNCISHNEPVDSSFTVKAQRGEISLKCKYCEKEFDHLAVLHAD.

Residues cysteine 109, cysteine 114, cysteine 138, and cysteine 141 each contribute to the Zn(2+) site.

The protein belongs to the PyrI family. In terms of assembly, contains catalytic and regulatory chains. The cofactor is Zn(2+).

Involved in allosteric regulation of aspartate carbamoyltransferase. In Yersinia pseudotuberculosis serotype O:1b (strain IP 31758), this protein is Aspartate carbamoyltransferase regulatory chain.